A 224-amino-acid chain; its full sequence is Ras-related protein Rab-11C (224 aa).

Residue 17–24 (GDSAVGKS) participates in GTP binding. Positions 39 to 47 (TKATIGVDF) match the Effector region motif. GTP contacts are provided by residues 65-69 (DTAGQ) and 123-126 (NKSD). A disordered region spans residues 194–224 (QGKKLTPLSDPAPQLTANTTSTHQEKKSGCC). S-geranylgeranyl cysteine attachment occurs at residues cysteine 223 and cysteine 224.

It belongs to the small GTPase superfamily. Rab family.

It is found in the membrane. This is Ras-related protein Rab-11C (rab11C) from Dictyostelium discoideum (Social amoeba).